We begin with the raw amino-acid sequence, 269 residues long: Formamidopyrimidine-DNA glycosylase (269 aa).

Pro2 (schiff-base intermediate with DNA) is an active-site residue. Residue Glu3 is the Proton donor of the active site. Lys57 serves as the catalytic Proton donor; for beta-elimination activity. Residues His90, Arg109, and Lys150 each contribute to the DNA site. The FPG-type zinc-finger motif lies at 235–269 (QVYGKGGLPCPKCGTELAEVKIGQRATVYCSQCQQ). Arg259 functions as the Proton donor; for delta-elimination activity in the catalytic mechanism.

This sequence belongs to the FPG family. In terms of assembly, monomer. Requires Zn(2+) as cofactor.

The enzyme catalyses Hydrolysis of DNA containing ring-opened 7-methylguanine residues, releasing 2,6-diamino-4-hydroxy-5-(N-methyl)formamidopyrimidine.. It catalyses the reaction 2'-deoxyribonucleotide-(2'-deoxyribose 5'-phosphate)-2'-deoxyribonucleotide-DNA = a 3'-end 2'-deoxyribonucleotide-(2,3-dehydro-2,3-deoxyribose 5'-phosphate)-DNA + a 5'-end 5'-phospho-2'-deoxyribonucleoside-DNA + H(+). Involved in base excision repair of DNA damaged by oxidation or by mutagenic agents. Acts as a DNA glycosylase that recognizes and removes damaged bases. Has a preference for oxidized purines, such as 7,8-dihydro-8-oxoguanine (8-oxoG). Has AP (apurinic/apyrimidinic) lyase activity and introduces nicks in the DNA strand. Cleaves the DNA backbone by beta-delta elimination to generate a single-strand break at the site of the removed base with both 3'- and 5'-phosphates. This Photobacterium damsela subsp. piscicida (Pasteurella piscicida) protein is Formamidopyrimidine-DNA glycosylase.